A 252-amino-acid polypeptide reads, in one-letter code: Transmembrane ascorbate-dependent reductase CYB561 (252 aa).

An N-acetylmethionine modification is found at Met-1. Residues 1-17 are Cytoplasmic-facing; it reads MEGPASPAPAPGALPYY. The helical transmembrane segment at 18–38 threads the bilayer; the sequence is VAFSQLLGLTVVAMTGAWLGM. One can recognise a Cytochrome b561 domain in the interval 20–221; sequence FSQLLGLTVV…FATVVLYILT (202 aa). Topologically, residues 39–52 are vesicular; that stretch reads YRGGIAWESALQFN. Residues 53–73 form a helical membrane-spanning segment; sequence VHPLCMVIGLVFLQGDALLVY. 3 residues coordinate heme b: His-54, Arg-74, and Lys-81. The Cytoplasmic portion of the chain corresponds to 74 to 86; the sequence is RVFRNEAKRTTKV. Residues Lys-81 and Lys-85 each contribute to the L-ascorbate site. A helical membrane pass occupies residues 87–107; that stretch reads LHGLLHVFAFVIALVGLVAVF. Heme b is bound by residues His-88, 117–120, and His-122; that span reads DLYS. Residues 108–125 are Vesicular-facing; the sequence is EHHRKKGYADLYSLHSWC. Residues 126–146 form a helical membrane-spanning segment; sequence GILVFALFFAQWLVGFSFFLF. Topologically, residues 147–159 are cytoplasmic; it reads PGASFSLRSRYRP. An L-ascorbate-binding site is contributed by Arg-154. Residues 160–180 traverse the membrane as a helical segment; sequence QHVFFGAAIFLLSVATALLGL. Residues His-161 and Glu-182 each coordinate heme b. The Vesicular portion of the chain corresponds to 181-199; that stretch reads KEALLFELGTKYSTFEPEG. Residues 200–220 form a helical membrane-spanning segment; the sequence is VLANVLGLLLAAFATVVLYIL. At 221–252 the chain is on the cytoplasmic side; it reads TRADWKRPLQAEEQALSMDFKTLTEGDSPSSQ. Lys-226 contributes to the heme b binding site. 2 positions are modified to phosphoserine: Ser-248 and Ser-250.

Requires heme b as cofactor.

It is found in the cytoplasmic vesicle. The protein resides in the secretory vesicle. It localises to the chromaffin granule membrane. The catalysed reaction is monodehydro-L-ascorbate radical(out) + L-ascorbate(in) = monodehydro-L-ascorbate radical(in) + L-ascorbate(out). Transmembrane reductase that uses ascorbate as an electron donor in the cytoplasm and transfers electrons across membranes to reduce monodehydro-L-ascorbate radical in the lumen of secretory vesicles. It is therefore involved the regeneration and homeostasis within secretory vesicles of ascorbate which in turn provides reducing equivalents needed to support the activity of intravesicular enzymes. In Ovis aries (Sheep), this protein is Transmembrane ascorbate-dependent reductase CYB561 (CYB561).